The chain runs to 398 residues: Trans-2-enoyl-CoA reductase [NADH] (398 aa).

NAD(+) contacts are provided by residues 47–52 (GASSGF), 74–75 (YE), 111–112 (DA), and 139–140 (LA). Y225 serves as a coordination point for substrate. Y235 (proton donor) is an active-site residue. Residues K244 and 274–276 (LVT) contribute to the NAD(+) site.

It belongs to the TER reductase family. As to quaternary structure, monomer.

The enzyme catalyses a 2,3-saturated acyl-CoA + NAD(+) = a (2E)-enoyl-CoA + NADH + H(+). It functions in the pathway lipid metabolism; fatty acid biosynthesis. Involved in the fatty acid synthesis (FAS II). Catalyzes the reduction of the carbon-carbon double bond of crotonyl-CoA to yield butyryl-CoA. This chain is Trans-2-enoyl-CoA reductase [NADH], found in Clostridium acetobutylicum (strain ATCC 824 / DSM 792 / JCM 1419 / IAM 19013 / LMG 5710 / NBRC 13948 / NRRL B-527 / VKM B-1787 / 2291 / W).